Consider the following 363-residue polypeptide: MAVTITLKTLQQQTFKIRMEPDETVKVLKEKIEAEKGRDAFPVAGQKLIYAGKILSDDVPIRDYRIDEKNFVVVMVTKTKAGQGTSAPPEASPTAAPESSTSFPPAPTSGMSHPPPAAREDKSPSEESAPTTSPESVSGSVPSSGSSGREEDAASTLVTGSEYETMLTEIMSMGYERERVVAALRASYNNPHRAVEYLLTGIPGSPEPEHGSVQESQVSEQPATEAAGENPLEFLRDQPQFQNMRQVIQQNPALLPALLQQLGQENPQLLQQISRHQEQFIQMLNEPPGELADISDVEGEVGAIGEEAPQMNYIQVTPQEKEAIERLKALGFPESLVIQAYFACEKNENLAANFLLSQNFDDE.

The Ubiquitin-like domain occupies 1-81; sequence MAVTITLKTL…VVVMVTKTKA (81 aa). Positions 81 to 160 are disordered; that stretch reads AGQGTSAPPE…EDAASTLVTG (80 aa). Residues 85–103 are compositionally biased toward low complexity; that stretch reads TSAPPEASPTAAPESSTSF. Lys-122 is covalently cross-linked (Glycyl lysine isopeptide (Lys-Gly) (interchain with G-Cter in ubiquitin)). 5 positions are modified to phosphoserine: Ser-123, Ser-128, Ser-133, Ser-136, and Ser-138. Residues 126–147 show a composition bias toward low complexity; the sequence is EESAPTTSPESVSGSVPSSGSS. Positions 161-201 constitute a UBA 1 domain; that stretch reads SEYETMLTEIMSMGYERERVVAALRASYNNPHRAVEYLLTG. A disordered region spans residues 203 to 227; the sequence is PGSPEPEHGSVQESQVSEQPATEAA. Ser-205 bears the Phosphoserine mark. Positions 213–222 are enriched in polar residues; sequence VQESQVSEQP. Residues Ser-295 and Ser-357 each carry the phosphoserine modification. The UBA 2 domain occupies 318 to 358; sequence PQEKEAIERLKALGFPESLVIQAYFACEKNENLAANFLLSQ. The HIV-1 vpr binding stretch occupies residues 319-363; sequence QEKEAIERLKALGFPESLVIQAYFACEKNENLAANFLLSQNFDDE.

Belongs to the RAD23 family. Interacts with XPC; the interaction is suggesting the existence of a functional equivalent variant XPC complex. Interacts with PSMD4 and PSMC5. Interacts with ATXN3. Interacts with UBQLN2. As to quaternary structure, (Microbial infection) Interacts with HIV-1 Vpr.

The protein resides in the nucleus. Multiubiquitin chain receptor involved in modulation of proteasomal degradation. Binds to 'Lys-48'-linked polyubiquitin chains in a length-dependent manner and with a lower affinity to 'Lys-63'-linked polyubiquitin chains. Proposed to be capable to bind simultaneously to the 26S proteasome and to polyubiquitinated substrates and to deliver ubiquitinated proteins to the proteasome. Its function is as follows. Involved in nucleotide excision repair and is thought to be functional equivalent for RAD23B in global genome nucleotide excision repair (GG-NER) by association with XPC. In vitro, the XPC:RAD23A dimer has NER activity. Can stabilize XPC. In terms of biological role, (Microbial infection) Involved in Vpr-dependent replication of HIV-1 in non-proliferating cells and primary macrophages. Required for the association of HIV-1 Vpr with the host proteasome. In Homo sapiens (Human), this protein is UV excision repair protein RAD23 homolog A (RAD23A).